Reading from the N-terminus, the 23-residue chain is Septenin 2a (23 aa).

Expressed in skin glands.

It is found in the secreted. Its function is as follows. May act as an antimicrobial peptide. In Osteopilus septentrionalis (Cuban treefrog), this protein is Septenin 2a.